A 459-amino-acid polypeptide reads, in one-letter code: Cysteine--tRNA ligase (459 aa).

Cys-27 contacts Zn(2+). Positions 29–39 (VTVYDDCHIGH) match the 'HIGH' region motif. Zn(2+) is bound by residues Cys-208, His-233, and Glu-237. Positions 265–269 (KMSKS) match the 'KMSKS' region motif. ATP is bound at residue Lys-268.

Belongs to the class-I aminoacyl-tRNA synthetase family. Monomer. The cofactor is Zn(2+).

The protein localises to the cytoplasm. The enzyme catalyses tRNA(Cys) + L-cysteine + ATP = L-cysteinyl-tRNA(Cys) + AMP + diphosphate. This chain is Cysteine--tRNA ligase, found in Francisella tularensis subsp. mediasiatica (strain FSC147).